We begin with the raw amino-acid sequence, 189 residues long: GMP synthase [glutamine-hydrolyzing] subunit A (189 aa).

Positions 1 to 189 (MIVILNNGGQ…CKKCGFEFEE (189 aa)) constitute a Glutamine amidotransferase type-1 domain. Cys-76 (nucleophile) is an active-site residue. Residues His-163 and Glu-165 contribute to the active site.

In terms of assembly, heterodimer composed of a glutamine amidotransferase subunit (A) and a GMP-binding subunit (B).

The catalysed reaction is XMP + L-glutamine + ATP + H2O = GMP + L-glutamate + AMP + diphosphate + 2 H(+). The protein operates within purine metabolism; GMP biosynthesis; GMP from XMP (L-Gln route): step 1/1. Catalyzes the synthesis of GMP from XMP. The protein is GMP synthase [glutamine-hydrolyzing] subunit A of Methanococcus maripaludis (strain C5 / ATCC BAA-1333).